Reading from the N-terminus, the 653-residue chain is MGRRRAPAGGSLGRALMRHQTQRSRSHRHTDSWLHTSELNDGYDWGRLNLQSVTEESSLDDFLATAELAGTEFVAEKLNIKFVPAEARTGLLSFEESQRIKKLHEENKQFLCIPRRPNWNKNTTPEELKQAEKDNFLEWRRQLVRLEEEQKLILTSFERNLDFWRQLWRVIERSDIVVQIVDARNPLLFRCEDLECYVKEIDASKENVILINKADLLTAEQRSAWATYFEKEDVKVIFWSALAGAIHLNGDSEEEANKDDRQSNTAEFEHSSFDEAEISHSETEHLPARDSPSLSENLTTDEDDSEYEDCPEEEEDDWQTCSEEDGPEEEDCGQDWKESSAADSEAQSRKTPQKRQLHNFSHLVSKQELLELFKELHTGRKVKDGQLTIGTGWGYPNVGKSSTINTIMGNKKVSVSATPGHTKHFQTLYVEPGLCLCDCPGLVMPSFVSTKAEMTCSGILPIDQMRDHVPPVSLVCQNIPRHVLEATYGINIIKPREDEDPHRPPTSEELLTAYGYMRGFMTAHGQPDQPRSARYILKDYVNGKLLYCHPPPGRDPVTFQHQHQRLPENKTNGDEIKMRPGRNKKVKQIENIVDKTFFHQENVRALTKGVQAVMGYKPGSGVVTAATVSSENGAGKPWKKHGNRNKKEKSCRL.

The segment at 1–31 is disordered; it reads MGRRRAPAGGSLGRALMRHQTQRSRSHRHTD. Basic residues predominate over residues 16–28; it reads LMRHQTQRSRSHR. Residues Ser93 and Ser97 each carry the phosphoserine modification. A CP-type G domain is found at 164–445; sequence WRQLWRVIER…LCDCPGLVMP (282 aa). 212–215 serves as a coordination point for GTP; that stretch reads NKAD. The segment at 251–358 is disordered; it reads DSEEEANKDD…RKTPQKRQLH (108 aa). At Ser252 the chain carries Phosphoserine. Residues 258–288 show a composition bias toward basic and acidic residues; sequence KDDRQSNTAEFEHSSFDEAEISHSETEHLPA. Acidic residues predominate over residues 299–333; the sequence is TTDEDDSEYEDCPEEEEDDWQTCSEEDGPEEEDCG. Residues 394–401 and 438–441 contribute to the GTP site; these read GYPNVGKS and DCPG. Residues 630 to 653 are disordered; it reads SENGAGKPWKKHGNRNKKEKSCRL. Residues 637–647 show a composition bias toward basic residues; the sequence is PWKKHGNRNKK.

The protein belongs to the TRAFAC class YlqF/YawG GTPase family. LSG1 subfamily.

It localises to the cytoplasm. It is found in the endoplasmic reticulum. The protein resides in the nucleus. The protein localises to the cajal body. The catalysed reaction is GTP + H2O = GDP + phosphate + H(+). Functionally, functions as a GTPase. May act by mediating the release of NMD3 from the 60S ribosomal subunit after export into the cytoplasm during the 60S ribosomal subunit maturation. The sequence is that of Large subunit GTPase 1 homolog from Macaca fascicularis (Crab-eating macaque).